A 162-amino-acid polypeptide reads, in one-letter code: Putative 4-hydroxy-4-methyl-2-oxoglutarate aldolase (162 aa).

Substrate contacts are provided by residues 75-78 (GDML) and arginine 97. Aspartate 98 serves as a coordination point for a divalent metal cation.

This sequence belongs to the class II aldolase/RraA-like family. Homotrimer. A divalent metal cation serves as cofactor.

The enzyme catalyses 4-hydroxy-4-methyl-2-oxoglutarate = 2 pyruvate. It carries out the reaction oxaloacetate + H(+) = pyruvate + CO2. Its function is as follows. Catalyzes the aldol cleavage of 4-hydroxy-4-methyl-2-oxoglutarate (HMG) into 2 molecules of pyruvate. Also contains a secondary oxaloacetate (OAA) decarboxylase activity due to the common pyruvate enolate transition state formed following C-C bond cleavage in the retro-aldol and decarboxylation reactions. The polypeptide is Putative 4-hydroxy-4-methyl-2-oxoglutarate aldolase (Ectopseudomonas mendocina (strain ymp) (Pseudomonas mendocina)).